The sequence spans 147 residues: Biogenesis of lysosome-related organelles complex 1 subunit 1 (147 aa).

2 disordered regions span residues 1-25 (MLTS…VRRK) and 125-147 (SSGA…PSAT).

It belongs to the BLOC1S1 family. Component of the biogenesis of lysosome-related organelles complex-1 (BLOC-1) composed of Blos1, Blos2, Blos3, Blos4, Dysb, Muted, Pldn and Snapin. Interacts with Pldn.

In terms of biological role, component of the biogenesis of lysosome-related organelles complex-1 (BLOC-1) involved in pigment granule biogenesis and membrane trafficking in synapses. In response to high synaptic activity at neuromuscular junctions, stabilizes Pldn protein levels and, together with Pldn, plays a role in promoting efficient synaptic vesicle recycling and re-formation through early endosomes. This Drosophila melanogaster (Fruit fly) protein is Biogenesis of lysosome-related organelles complex 1 subunit 1.